The chain runs to 46 residues: Peroxidase 1 (46 aa).

It belongs to the peroxidase family. Classical plant (class III) peroxidase subfamily. Heme b serves as cofactor. Ca(2+) is required as a cofactor.

Its subcellular location is the secreted. It carries out the reaction 2 a phenolic donor + H2O2 = 2 a phenolic radical donor + 2 H2O. Functionally, removal of H(2)O(2), oxidation of toxic reductants, biosynthesis and degradation of lignin, suberization, auxin catabolism, response to environmental stresses such as wounding, pathogen attack and oxidative stress. These functions might be dependent on each isozyme/isoform in each plant tissue. The polypeptide is Peroxidase 1 (Catharanthus roseus (Madagascar periwinkle)).